The following is a 463-amino-acid chain: Hydrolase pyiE (463 aa).

Residue S252 is the Nucleophile of the active site. The interval K350–D373 is disordered.

Belongs to the AB hydrolase superfamily. FUS2 hydrolase family. Homodimer.

Its pathway is mycotoxin biosynthesis. Its function is as follows. Hydrolyase; part of the gene cluster that mediates the biosynthesis of the mycotoxin pyrichalasin H, a tyrosine-derived cytochalasan that inhibits the growth of rice seedlings, but also inhibits lymphocyte capping and actin polymerization and alters cell morphology. Pyrichalasin H is indicated as the responsible agent for the genus-specific pathogenicity of M.grisea toward crabgrass. The first step in the pathway is catalyzed by the O-methyltransferase pyiA which methylates free tyrosine to generate the precursor O-methyltyrosine. The hybrid PKS-NRPS pyiS, assisted by the enoyl reductase pyiC, are responsible for fusion of the O-methyltyrosine precursor and the polyketide backbone. The polyketide synthase module (PKS) of pyiS is responsible for the synthesis of the polyketide backbone and the downstream nonribosomal peptide synthetase (NRPS) amidates the carboxyl end of the polyketide with the O-methyltyrosine precursor. As the NRPS A-domain demonstrates substrate tolerance, pyiS can also use phenylalanine, tyrosine and even para-chlorophenylalanine as amino acid precursor, which leads to the production of novel cytochalasans, including halogenated cytochalasans. Because pyiS lacks a designated enoylreductase (ER) domain, the required activity is provided the enoyl reductase pyiC. Reduction by the hydrolyase pyiE leads to 1,5-dihydropyrrolone, which is substrate for dehydration and intra-molecular Diels-Alder cyclization by the Diels-Alderase pyiF to yield the required isoindolone-fused macrocycle. The tailoring cytochrome P450 monooxygenases piyD and piyG catalyze the hydroxylation at C-18 and C-7, respectivily, whereas the short-chain dehydrogenase/reductase pyiH reduces the carbonyl at C-21 in preparation for the transfer of an acetyl group by the acetyltransferase pyiB. These 3 reactions whose order is not clear yet, lead to the production of O-methylpyrichalasin J, a deacetylated pyrichalasin H. Finally, pyiB to converts O-methylpyrichalasin J into the final product pyrichalasin H via acetylation of C-21. This is Hydrolase pyiE from Pyricularia grisea (Crabgrass-specific blast fungus).